Consider the following 168-residue polypeptide: Cytochrome c-type biogenesis protein CcmE (168 aa).

The Cytoplasmic segment spans residues 1–7 (MTRKKRR). A helical; Signal-anchor for type II membrane protein transmembrane segment spans residues 8–28 (LYMLGLALLGLGTATALTLSA). Over 29 to 168 (FEENIVFFYS…KVHATTTLKP (140 aa)) the chain is Periplasmic. Residues His-122 and Tyr-126 each coordinate heme. The segment at 149-168 (SIYTPADSDDKVHATTTLKP) is disordered.

It belongs to the CcmE/CycJ family.

The protein resides in the cell inner membrane. Its function is as follows. Heme chaperone required for the biogenesis of c-type cytochromes. Transiently binds heme delivered by CcmC and transfers the heme to apo-cytochromes in a process facilitated by CcmF and CcmH. The polypeptide is Cytochrome c-type biogenesis protein CcmE (Rhodospirillum centenum (strain ATCC 51521 / SW)).